The primary structure comprises 404 residues: Cysteine desulfurase IscS (404 aa).

Pyridoxal 5'-phosphate-binding positions include A75–T76, N155, Q183, and S203–H205. K206 carries the post-translational modification N6-(pyridoxal phosphate)lysine. T243 contacts pyridoxal 5'-phosphate. C328 acts as the Cysteine persulfide intermediate in catalysis. C328 serves as a coordination point for [2Fe-2S] cluster.

It belongs to the class-V pyridoxal-phosphate-dependent aminotransferase family. NifS/IscS subfamily. As to quaternary structure, homodimer. Forms a heterotetramer with IscU, interacts with other sulfur acceptors. Pyridoxal 5'-phosphate is required as a cofactor.

It is found in the cytoplasm. It catalyses the reaction (sulfur carrier)-H + L-cysteine = (sulfur carrier)-SH + L-alanine. It functions in the pathway cofactor biosynthesis; iron-sulfur cluster biosynthesis. In terms of biological role, master enzyme that delivers sulfur to a number of partners involved in Fe-S cluster assembly, tRNA modification or cofactor biosynthesis. Catalyzes the removal of elemental sulfur atoms from cysteine to produce alanine. Functions as a sulfur delivery protein for Fe-S cluster synthesis onto IscU, an Fe-S scaffold assembly protein, as well as other S acceptor proteins. The polypeptide is Cysteine desulfurase IscS (Buchnera aphidicola subsp. Schizaphis graminum (strain Sg)).